The primary structure comprises 351 residues: Fructose-1,6-bisphosphatase class 1 1 (351 aa).

Residues glutamate 84, aspartate 106, leucine 108, and aspartate 109 each coordinate Mg(2+). Substrate-binding positions include 109 to 112 (DGSS) and asparagine 205. Residue glutamate 277 coordinates Mg(2+).

The protein belongs to the FBPase class 1 family. In terms of assembly, homotetramer. Requires Mg(2+) as cofactor.

It localises to the cytoplasm. It catalyses the reaction beta-D-fructose 1,6-bisphosphate + H2O = beta-D-fructose 6-phosphate + phosphate. It participates in carbohydrate biosynthesis; Calvin cycle. The protein is Fructose-1,6-bisphosphatase class 1 1 of Methylibium petroleiphilum (strain ATCC BAA-1232 / LMG 22953 / PM1).